A 765-amino-acid chain; its full sequence is AMP deaminase 3 (765 aa).

A phosphoserine mark is found at serine 85 and serine 106. Positions 315 and 317 each coordinate Zn(2+). Residues histidine 317 and 386 to 391 (KFNSKY) each bind substrate. Histidine 584 contacts Zn(2+). Glutamate 587 provides a ligand contact to substrate. Residue histidine 606 is the Proton acceptor of the active site. Zn(2+) is bound at residue aspartate 661. 662–665 (DPMQ) contacts substrate.

It belongs to the metallo-dependent hydrolases superfamily. Adenosine and AMP deaminases family. As to quaternary structure, homotetramer. The cofactor is Zn(2+). Expressed in adult tissues such as aorta, heart, kidney, lung, muscle and thyroid. Weakly expressed in thyroid and not detected in liver.

It catalyses the reaction AMP + H2O + H(+) = IMP + NH4(+). The protein operates within purine metabolism; IMP biosynthesis via salvage pathway; IMP from AMP: step 1/1. Functionally, AMP deaminase plays a critical role in energy metabolism. This is AMP deaminase 3 from Rattus norvegicus (Rat).